The sequence spans 238 residues: IkB-like protein (238 aa).

ANK repeat units follow at residues 48–80, 87–118, 124–153, and 158–187; these read GSSV…IINH, GNSA…TRIC, GMTP…PTQK, and GFTA…PLYM. A Nuclear localization signal motif is present at residues 80-86; sequence HHRRDND. The short motif at 202–213 is the Nuclear localization signal element; that stretch reads KKKPKIIITGCK. The PxIxITxC motif; Interaction with host PPP3CA signature appears at 205 to 212; the sequence is PKIIITGC. The FLCV motif motif lies at 227-230; sequence FLCV.

The protein belongs to the asfivirus A238L family. In terms of assembly, interacts with host PPIA. Interacts with host PPP3CA/Calcineurin. Interacts with host RELA/p65; interaction of the 32 kDa form with host RELA results in the formation of a stable complex with NF-kappa-B. Interacts with host PPP3R1. Interacts with host EP300; this interaction inhibits the association of host EP300 with host RELA, JUN and NFATC2. The protein exists in a 28 kDa and a 32 kDa form, probably due to post-translational modifications which are neither phosphorylation, nor sumoylation.

It is found in the host nucleus. The protein localises to the host cytoplasm. IkB-like protein that inhibits the binding of NF-kappa-B to DNA, thereby downregulating pro-inflammatory cytokine production. Forms a heterodimer with the NF-kappa-B subunit RELA/p65 and prevents the activation of the NF-kappa-B transcription factor. Inhibits calcineurin function, which is required for the induction of nuclear factor of activated T cells (NFAT)-dependent immune response genes. Prevents the binding of substrates to calcineurin without affecting the phosphatase activity. Does not contain the serine residues that are phosphorylated by host IkB kinase and thus is not degraded following stimulation of the NFkB pathway. This chain is IkB-like protein (A238L), found in Ornithodoros (relapsing fever ticks).